We begin with the raw amino-acid sequence, 274 residues long: Large ribosomal subunit protein uL2 (274 aa).

Residues 223-258 (VAMNPVDHPHGGGEGRTSGGRHPVTPWGIPTKGYKT) are disordered.

It belongs to the universal ribosomal protein uL2 family. As to quaternary structure, part of the 50S ribosomal subunit. Forms a bridge to the 30S subunit in the 70S ribosome.

Its function is as follows. One of the primary rRNA binding proteins. Required for association of the 30S and 50S subunits to form the 70S ribosome, for tRNA binding and peptide bond formation. It has been suggested to have peptidyltransferase activity; this is somewhat controversial. Makes several contacts with the 16S rRNA in the 70S ribosome. This chain is Large ribosomal subunit protein uL2, found in Pelobacter propionicus (strain DSM 2379 / NBRC 103807 / OttBd1).